A 175-amino-acid polypeptide reads, in one-letter code: Pituitary adenylate cyclase-activating polypeptide (175 aa).

An N-terminal signal peptide occupies residues 1 to 24 (MTMCSGARLALLVYGIIMHSSVSC). A propeptide spanning residues 25 to 78 (SPAAGLSFPGIRPEDEAYDQDGNPLQDFYDWDPPGVGSPASALRDAYALYYPAD) is cleaved from the precursor. An important for receptor binding region spans residues 149-157 (VKKYLAAVL). L157 bears the Leucine amide mark. Lysine amide is present on K168. A propeptide spanning residues 172–175 (IAYL) is cleaved from the precursor.

It belongs to the glucagon family.

It localises to the secreted. Functionally, PACAP is a neuropeptide involved in diverse array of physiological processes through activating the PACAP subfamily of class B1 G protein-coupled receptors: VIP receptor 1 (VIPR1), VIP receptor 2 (VIPR2), and PACAP type I receptor (ADCYAP1R1). Exerts neuroprotective and general cytoprotective effects due to anti-apoptotic, anti-inflammatory, and antioxidant actions. Promotes neuron projection development through the RAPGEF2/Rap1/B-Raf/ERK pathway. In chromaffin cells, induces long-lasting increase of intracellular calcium concentrations and neuroendocrine secretion. Involved in the control of glucose homeostasis, induces insulin secretion by pancreatic beta cells. PACAP exists in two bioactive forms from proteolysis of the same precursor protein, PACAP27 and PACAP38, which differ by eleven amino acid residues in the C-terminus. This is Pituitary adenylate cyclase-activating polypeptide from Mus musculus (Mouse).